A 500-amino-acid chain; its full sequence is Glycerol kinase (500 aa).

Residue Thr-13 coordinates ADP. Thr-13, Thr-14, and Ser-15 together coordinate ATP. Thr-13 provides a ligand contact to sn-glycerol 3-phosphate. Arg-17 lines the ADP pocket. Sn-glycerol 3-phosphate contacts are provided by Arg-83, Glu-84, Tyr-135, and Asp-244. Residues Arg-83, Glu-84, Tyr-135, Asp-244, and Gln-245 each contribute to the glycerol site. Positions 266, 309, 410, and 414 each coordinate ADP. ATP is bound by residues Thr-266, Gly-309, and Gly-410.

Belongs to the FGGY kinase family.

The enzyme catalyses glycerol + ATP = sn-glycerol 3-phosphate + ADP + H(+). Its pathway is polyol metabolism; glycerol degradation via glycerol kinase pathway; sn-glycerol 3-phosphate from glycerol: step 1/1. With respect to regulation, inhibited by fructose 1,6-bisphosphate (FBP). Key enzyme in the regulation of glycerol uptake and metabolism. Catalyzes the phosphorylation of glycerol to yield sn-glycerol 3-phosphate. The protein is Glycerol kinase of Chromobacterium violaceum (strain ATCC 12472 / DSM 30191 / JCM 1249 / CCUG 213 / NBRC 12614 / NCIMB 9131 / NCTC 9757 / MK).